Consider the following 1270-residue polypeptide: Microtubule-associated tumor suppressor 1 homolog (1270 aa).

The segment covering 1–14 (MTDDNSDDKIEDEL) has biased composition (acidic residues). 3 disordered regions span residues 1 to 50 (MTDD…NSAN), 183 to 217 (SFHT…DKMH), and 374 to 402 (TEDT…SPPG). The segment covering 39 to 50 (SSASSVNWNSAN) has biased composition (low complexity). Residue Thr186 is modified to Phosphothreonine. Over residues 200–211 (TSSLSYSTWTSS) the composition is skewed to low complexity. Residues Ser386, Ser399, and Ser443 each carry the phosphoserine modification. The segment covering 386–396 (SGTQNHTSELI) has biased composition (polar residues). Disordered stretches follow at residues 524 to 558 (DAAL…RTPR) and 592 to 622 (THSK…SSSN). Low complexity predominate over residues 538–547 (SASSPSSAIS). Residue Ser629 is modified to Phosphoserine. Polar residues-rich tracts occupy residues 701–710 (SKTTTTSGRN), 759–776 (VSSS…SSWV), and 797–816 (TGST…YSNN). The interval 701-816 (SKTTTTSGRN…HSELSTYSNN (116 aa)) is disordered. The stretch at 940–1231 (IQHLLSEREE…RLSMENEELL (292 aa)) forms a coiled coil. 8 positions are modified to phosphoserine: Ser1203, Ser1224, Ser1245, Ser1255, Ser1259, Ser1261, Ser1264, and Ser1268. The tract at residues 1237 to 1270 (GDLCSPKRSPTSSAIPFQSPRNSGSFPSPSISPR) is disordered. Over residues 1244–1270 (RSPTSSAIPFQSPRNSGSFPSPSISPR) the composition is skewed to polar residues.

Belongs to the MTUS1 family. In terms of assembly, homodimer. Interacts with AGTR2. Interacts with PTPN6. Associates with microtubules.

The protein resides in the mitochondrion. It localises to the golgi apparatus. The protein localises to the cell membrane. Its subcellular location is the nucleus. Cooperates with AGTR2 to inhibit ERK2 activation and cell proliferation. May be required for AGTR2 cell surface expression. Together with PTPN6, induces UBE2V2 expression upon angiotensin-II stimulation. The chain is Microtubule-associated tumor suppressor 1 homolog (MTUS1) from Pongo abelii (Sumatran orangutan).